A 171-amino-acid chain; its full sequence is Large ribosomal subunit protein uL10 (171 aa).

It belongs to the universal ribosomal protein uL10 family. As to quaternary structure, part of the ribosomal stalk of the 50S ribosomal subunit. The N-terminus interacts with L11 and the large rRNA to form the base of the stalk. The C-terminus forms an elongated spine to which L12 dimers bind in a sequential fashion forming a multimeric L10(L12)X complex.

In terms of biological role, forms part of the ribosomal stalk, playing a central role in the interaction of the ribosome with GTP-bound translation factors. The chain is Large ribosomal subunit protein uL10 from Corynebacterium efficiens (strain DSM 44549 / YS-314 / AJ 12310 / JCM 11189 / NBRC 100395).